The sequence spans 43 residues: Potassium channel toxin gamma-KTx 4.1 (43 aa).

4 disulfide bridges follow: Cys5–Cys23, Cys11–Cys34, Cys20–Cys39, and Cys24–Cys41.

It belongs to the ergtoxin family. Gamma-KTx 4 subfamily. Expressed by the venom gland.

The protein localises to the secreted. In terms of biological role, reversibly blocks Kv11/ERG potassium channels. In Centruroides limpidus (Mexican scorpion), this protein is Potassium channel toxin gamma-KTx 4.1.